A 441-amino-acid chain; its full sequence is tRNA modification GTPase MnmE (441 aa).

The (6S)-5-formyl-5,6,7,8-tetrahydrofolate site is built by Arg21, Glu79, and Lys118. Positions 214–367 (GIHITILGAP…LVAELARVVE (154 aa)) constitute a TrmE-type G domain. Residues 224 to 229 (NAGKSS), 243 to 249 (SAQAGTT), and 268 to 271 (DTAG) contribute to the GTP site. Positions 228 and 249 each coordinate Mg(2+). A (6S)-5-formyl-5,6,7,8-tetrahydrofolate-binding site is contributed by Lys441.

The protein belongs to the TRAFAC class TrmE-Era-EngA-EngB-Septin-like GTPase superfamily. TrmE GTPase family. In terms of assembly, homodimer. Heterotetramer of two MnmE and two MnmG subunits. K(+) serves as cofactor.

The protein localises to the cytoplasm. Its function is as follows. Exhibits a very high intrinsic GTPase hydrolysis rate. Involved in the addition of a carboxymethylaminomethyl (cmnm) group at the wobble position (U34) of certain tRNAs, forming tRNA-cmnm(5)s(2)U34. The chain is tRNA modification GTPase MnmE from Paramagnetospirillum magneticum (strain ATCC 700264 / AMB-1) (Magnetospirillum magneticum).